The primary structure comprises 192 residues: uncharacterized protein (192 aa).

The tract at residues 168–192 (PLWRKSEAGSRKARTSNSGGPTKRA) is disordered. Residues 182–192 (TSNSGGPTKRA) are compositionally biased toward polar residues.

The protein to A.xylinum IS1268 ORFA.

This is an uncharacterized protein from Sinorhizobium fredii (strain NBRC 101917 / NGR234).